Consider the following 282-residue polypeptide: ATP synthase gamma chain (282 aa).

It belongs to the ATPase gamma chain family. As to quaternary structure, F-type ATPases have 2 components, CF(1) - the catalytic core - and CF(0) - the membrane proton channel. CF(1) has five subunits: alpha(3), beta(3), gamma(1), delta(1), epsilon(1). CF(0) has three main subunits: a, b and c.

It localises to the cell membrane. In terms of biological role, produces ATP from ADP in the presence of a proton gradient across the membrane. The gamma chain is believed to be important in regulating ATPase activity and the flow of protons through the CF(0) complex. This is ATP synthase gamma chain from Clostridium botulinum (strain Okra / Type B1).